The chain runs to 122 residues: Seripauperin-5 (122 aa).

A helical membrane pass occupies residues 7–24 (IAAGVAAIAAGASAAATT).

The protein belongs to the SRP1/TIP1 family. Seripauperin subfamily.

It is found in the membrane. The polypeptide is Seripauperin-5 (PAU5) (Saccharomyces cerevisiae (strain ATCC 204508 / S288c) (Baker's yeast)).